The chain runs to 707 residues: Zinc finger protein 60 (707 aa).

A KRAB domain is found at Val14–Gln86. 19 consecutive C2H2-type zinc fingers follow at residues Tyr173–His195, Tyr201–His223, Phe229–His251, Phe257–His282, Tyr288–His310, Phe316–His338, Phe344–His366, Phe372–His394, Phe400–His422, Tyr428–His450, Phe456–His478, Phe484–His506, Phe512–His534, Tyr540–His562, Phe568–His590, Tyr596–His618, Phe624–His646, Phe652–His674, and Tyr680–His702.

It belongs to the krueppel C2H2-type zinc-finger protein family. In terms of tissue distribution, expressed widely and evenly in most adult mouse tissues.

The protein resides in the nucleus. May have a role during differentiation processes. The polypeptide is Zinc finger protein 60 (Zfp60) (Mus musculus (Mouse)).